A 557-amino-acid chain; its full sequence is GLYEVVVGVLGGGQLGRMMCQAASQMAIKVMVLDPQENCPASSLSYHHMVGSFDESTKVEEFAKRCGVLTVEIEHVDVDTLEKLEKQGVDCQPKASTVRIIQDKYQQKVALLPAWIPLPEFMKIDDLKAKKWDSLDIHFMIKSRRLAYDGRGNFVAKSEEELSSAVDALGGFDRGLYAEKWAPFVKELAVIVARGRDNSISCYPVVELFTGHICHIVKSPANVNWKTRELAIEVAFNAVKSLEVPGVFAVELFLTKEGEILLNEVAPRPHNSGHHTIESCHTSQFEQHLPAVVGLPLGDPSMKTPAAIMYNILGEEEGEHGFQLAHQLMKRAMTIPGASVHWYDKPEMRKQRKMCHITIVGSSLSSIESNLAILLEGKGLHDKTAVCSTLLGFIMGSDSDLPVMKSAAEMMEMFGVPHEVRIVSAHRTPELMFCYASSAHERGYQVIIAGAGGAAHLPGMVASLTPLPVVGVPVRASTLDGLDSLLSIVQMPRGVPVATVAVNNATNAGLLAVRMLGVANDNLLSRMSQYQEDQKEAVLREGDKLEKHGWESYLKNS.

The ATP-grasp domain occupies 108-293 (KVALLPAWIP…QFEQHLPAVV (186 aa)). ATP is bound at residue 132 to 189 (WDSLDIHFMIKSRRLAYDGRGNFVAKSEEELSSAVDALGGFDRGLYAEKWAPFVKELA). The interval 387-557 (CSTLLGFIMG…HGWESYLKNS (171 aa)) is AIR carboxylase catalytic subunit.

This sequence in the C-terminal section; belongs to the AIR carboxylase family. Class I subfamily.

The protein resides in the plastid. It is found in the chloroplast. The enzyme catalyses 5-amino-1-(5-phospho-D-ribosyl)imidazole-4-carboxylate + H(+) = 5-amino-1-(5-phospho-beta-D-ribosyl)imidazole + CO2. Its pathway is purine metabolism; IMP biosynthesis via de novo pathway; 5-amino-1-(5-phospho-D-ribosyl)imidazole-4-carboxylate from 5-amino-1-(5-phospho-D-ribosyl)imidazole (carboxylase route): step 1/1. The protein is Phosphoribosylaminoimidazole carboxylase, chloroplastic (PURKE) of Vigna aconitifolia (Moth bean).